Consider the following 520-residue polypeptide: Versicolorin B desaturase (520 aa).

Residues 22–42 form a helical membrane-spanning segment; that stretch reads IFTTILSIFGIALSAVAAWGI. N266 and N426 each carry an N-linked (GlcNAc...) asparagine glycan. Residue C462 coordinates heme.

The protein belongs to the cytochrome P450 family. Heme serves as cofactor.

It is found in the membrane. It catalyses the reaction versicolorin B + NADPH + O2 + H(+) = versicolorin A + NADP(+) + 2 H2O. The protein operates within mycotoxin biosynthesis. Functionally, versicolorin B desaturase; part of the fragmented gene cluster that mediates the biosynthesis of dothistromin (DOTH), a polyketide toxin very similar in structure to the aflatoxin precursor, versicolorin B. The first step of the pathway is the conversion of acetate to norsolorinic acid (NOR) and requires the fatty acid synthase subunits hexA and hexB, as well as the polyketide synthase pksA. PksA combines a hexanoyl starter unit and 7 malonyl-CoA extender units to synthesize the precursor NOR. The hexanoyl starter unit is provided to the acyl-carrier protein (ACP) domain by the fungal fatty acid synthase hexA/hexB. The second step is the conversion of NOR to averantin (AVN) and requires the norsolorinic acid ketoreductase nor1, which catalyzes the dehydration of norsolorinic acid to form (1'S)-averantin. The cytochrome P450 monooxygenase avnA then catalyzes the hydroxylation of AVN to 5'hydroxyaverantin (HAVN). The next step is performed by adhA that transforms HAVN to averufin (AVF). Averufin might then be converted to hydroxyversicolorone by cypX and avfA. Hydroxyversicolorone is further converted versiconal hemiacetal acetate (VHA) by moxY. VHA is then the substrate for the versiconal hemiacetal acetate esterase est1 to yield versiconal (VAL). Versicolorin B synthase vbsA then converts VAL to versicolorin B (VERB) by closing the bisfuran ring. Then, the activity of the versicolorin B desaturase verB leads to versicolorin A (VERA). DotB, a predicted chloroperoxidase, may perform epoxidation of the A-ring of VERA. Alternatively, a cytochrome P450, such as cypX or avnA could catalyze this step. It is also possible that another, uncharacterized, cytochrome P450 enzyme is responsible for this step. Opening of the epoxide could potentially be achieved by the epoxide hydrolase epoA. However, epoA seems not to be required for DOTH biosynthesis, but other epoxide hydrolases may have the ability to complement this hydrolysis. Alternatively, opening of the epoxide ring could be achieved non-enzymatically. The next step is the deoxygenation of ring A to yield the 5,8-dihydroxyanthraquinone which is most likely catalyzed by the NADPH dehydrogenase encoded by ver1. The last stages of DOTH biosynthesis are proposed to involve hydroxylation of the bisfuran. OrdB and norB might have oxidative roles here. An alternative possibility is that cytochrome P450 monoogenases such as avnA and cypX might perform these steps in addition to previously proposed steps. The protein is Versicolorin B desaturase of Dothistroma septosporum (strain NZE10 / CBS 128990) (Red band needle blight fungus).